The following is a 738-amino-acid chain: 130 kDa Glycoprotein O (738 aa).

Positions 1-23 (MLHISRLGLFLALFAIVMHSVNL) are cleaved as a signal peptide. 7 N-linked (GlcNAc...) asparagine; by host glycosylation sites follow: N41, N64, N114, N175, N190, N201, and N221. Low complexity predominate over residues 240–263 (TPSSTPSSTSASITSPHIPSTNTP). Residues 240–272 (TPSSTPSSTSASITSPHIPSTNTPTPEPSPVTK) are disordered. Residues N273 and N326 are each glycosylated (N-linked (GlcNAc...) asparagine; by host). A compositionally biased stretch (polar residues) spans 330-342 (KTEQNTENPTENP). Residues 330 to 351 (KTEQNTENPTENPKSPPKPTNF) form a disordered region. N353, N370, N445, N477, N483, N529, N547, N573, N629, N646, and N689 each carry an N-linked (GlcNAc...) asparagine; by host glycan. Over residues 541 to 554 (NALPSSNSSHSITK) the composition is skewed to polar residues. A disordered region spans residues 541-568 (NALPSSNSSHSITKVTEEPKQNRMSAST). The interval 667–712 (PQTITERSTDVKKKSSTESREANKTLPGNDYRVTDKNSHNHPDNLT) is disordered. 2 stretches are compositionally biased toward basic and acidic residues: residues 673–689 (RSTDVKKKSSTESREAN) and 698–708 (RVTDKNSHNHP). 3 N-linked (GlcNAc...) asparagine; by host glycosylation sites follow: N710, N720, and N733.

The protein belongs to the herpesviridae U47 family. As to quaternary structure, part of a gH-gL-gO complex. Post-translationally, 120 kDa Glycoprotein O: A shorter mature protein, gO-80K, is produced probably by proteolytic cleavage. 120 kDa Glycoprotein O: Modified with high mannose-oligosaccharides. In terms of processing, N-glycosylated with complex glycans.

It localises to the virion. The protein resides in the host cell membrane. The sequence is that of 130 kDa Glycoprotein O (U47) from Human herpesvirus 6B (strain Z29) (HHV-6 variant B).